The primary structure comprises 160 residues: Cytochrome b6-f complex subunit 4 (160 aa).

Transmembrane regions (helical) follow at residues 36-56, 95-115, and 131-151; these read LLYI…GLAV, LLGV…PFLE, and TVFL…ALPI.

This sequence belongs to the cytochrome b family. PetD subfamily. The 4 large subunits of the cytochrome b6-f complex are cytochrome b6, subunit IV (17 kDa polypeptide, petD), cytochrome f and the Rieske protein, while the 4 small subunits are petG, petL, petM and petN. The complex functions as a dimer.

The protein resides in the plastid. It is found in the chloroplast thylakoid membrane. Component of the cytochrome b6-f complex, which mediates electron transfer between photosystem II (PSII) and photosystem I (PSI), cyclic electron flow around PSI, and state transitions. This is Cytochrome b6-f complex subunit 4 from Chara vulgaris (Common stonewort).